The chain runs to 346 residues: Endosome-associated-trafficking regulator 1 (346 aa).

A compositionally biased stretch (polar residues) spans 46–67 (FVSSNSKRAFSKDSNQSTTQFR). Disordered stretches follow at residues 46–77 (FVSSNSKRAFSKDSNQSTTQFRGPSECPDGNL), 93–129 (LQEDEDDDWSGSYHPSVIENTHGPKVPSPAGTDGDES), and 153–173 (SPPAGLHGKTQHRPDSTSDSE). Residues 170 to 317 (SDSEEGLRLL…SGAQSSIKQL (148 aa)) adopt a coiled-coil conformation.

This sequence belongs to the ENTR1 family.

Its subcellular location is the cytoplasm. It localises to the early endosome. It is found in the endosome. The protein resides in the recycling endosome. The protein localises to the midbody. Its subcellular location is the cytoskeleton. It localises to the microtubule organizing center. It is found in the centrosome. The protein resides in the cilium basal body. Functionally, endosome-associated protein that plays a role in membrane receptor sorting, cytokinesis and ciliogenesis. The chain is Endosome-associated-trafficking regulator 1 from Xenopus tropicalis (Western clawed frog).